The chain runs to 202 residues: Putative pituitary tumor-transforming gene 3 protein (202 aa).

Residues 61-64 (RKAL) carry the D-box motif. The short motif at 163 to 173 (PPSPLKMPSPP) is the SH3-binding element.

The protein belongs to the securin family.

The protein resides in the cytoplasm. The protein localises to the nucleus. The chain is Putative pituitary tumor-transforming gene 3 protein (PTTG3) from Pan troglodytes (Chimpanzee).